Here is a 283-residue protein sequence, read N- to C-terminus: Movement protein (283 aa).

This sequence belongs to the tenuiviruses pc4 protein family.

In terms of biological role, transports viral genome to neighboring plant cells directly through plasmosdesmata, without any budding. The movement protein allows efficient cell to cell propagation, by bypassing the host cell wall barrier. This is Movement protein from Maize stripe virus (MStV).